The chain runs to 404 residues: Phosphopentomutase (404 aa).

Mn(2+) is bound by residues Asp-10, Asp-303, His-308, Asp-344, His-345, and His-356.

It belongs to the phosphopentomutase family. The cofactor is Mn(2+).

Its subcellular location is the cytoplasm. The enzyme catalyses 2-deoxy-alpha-D-ribose 1-phosphate = 2-deoxy-D-ribose 5-phosphate. It carries out the reaction alpha-D-ribose 1-phosphate = D-ribose 5-phosphate. It participates in carbohydrate degradation; 2-deoxy-D-ribose 1-phosphate degradation; D-glyceraldehyde 3-phosphate and acetaldehyde from 2-deoxy-alpha-D-ribose 1-phosphate: step 1/2. Functionally, isomerase that catalyzes the conversion of deoxy-ribose 1-phosphate (dRib-1-P) and ribose 1-phosphate (Rib-1-P) to deoxy-ribose 5-phosphate (dRib-5-P) and ribose 5-phosphate (Rib-5-P), respectively. This chain is Phosphopentomutase, found in Shewanella oneidensis (strain ATCC 700550 / JCM 31522 / CIP 106686 / LMG 19005 / NCIMB 14063 / MR-1).